We begin with the raw amino-acid sequence, 91 residues long: MAIKLINIGFGNIVSANRLVAIVSPESAPIKRIIQEARDRGMLIDATYGRRTRAVIITDSDHVILSAVQPETVAHRLASKAEEEDINEGEE.

Belongs to the RemA family.

The polypeptide is Putative regulatory protein CLB_2388 (Clostridium botulinum (strain ATCC 19397 / Type A)).